We begin with the raw amino-acid sequence, 396 residues long: Odorant receptor 49a (396 aa).

The Cytoplasmic segment spans residues 1–6 (MEKLRS). Residues 7–27 (YEDFIFMANMMFKTLGYDLFH) form a helical membrane-spanning segment. The Extracellular segment spans residues 28–34 (TPKPWWR). Residues 35 to 55 (YLLVRGYFVLCTISNFYEASM) form a helical membrane-spanning segment. Residues 56–70 (VTTRIIEWESLAGSP) are Cytoplasmic-facing. A helical transmembrane segment spans residues 71 to 91 (SKIMRQGLHFFYMLSSQLKFI). Residues 92–141 (TFMINRKRLLQLSHRLKELYPHKEQNQRKYEVNKYYLSCSTRNVLYVYYF) are Extracellular-facing. Residues 142–162 (VMVVMALEPLVQSCIMYLIGF) traverse the membrane as a helical segment. The Cytoplasmic segment spans residues 163–209 (GKADFTYKRIFPTRLTFDSEKPLGYVLAYVIDFTYSQFIVNVSLGTD). The chain crosses the membrane as a helical span at residues 210–230 (LWMMCVSSQISMHLGYLANML). The Extracellular portion of the chain corresponds to 231–266 (ASIRPSPETEQQDCDFLASIIKRHQLMIRLQKDVNY). Residues 267 to 287 (VFGLLLASNLFTTSCLLCCMA) traverse the membrane as a helical segment. At 288-296 (YYTVVEGFN) the chain is on the cytoplasmic side. A helical membrane pass occupies residues 297–317 (WEGISYMMLFASVAAQFYVVS). At 318-396 (SHGQMLIDLS…FAVIRQTVEK (79 aa)) the chain is on the extracellular side.

The protein belongs to the insect chemoreceptor superfamily. Heteromeric odorant receptor channel (TC 1.A.69) family. Or49a subfamily. As to quaternary structure, interacts with Orco. Complexes exist early in the endomembrane system in olfactory sensory neurons (OSNs), coupling these complexes to the conserved ciliary trafficking pathway.

The protein resides in the cell membrane. Functionally, odorant receptor which mediates acceptance or avoidance behavior, depending on its substrates. The odorant receptor repertoire encodes a large collection of odor stimuli that vary widely in identity, intensity, and duration. May form a complex with Orco to form odorant-sensing units, providing sensitive and prolonged odorant signaling and calcium permeability. Involved in the behavioral responses to butanol and 2-heptanone. The polypeptide is Odorant receptor 49a (Or49a) (Drosophila melanogaster (Fruit fly)).